Reading from the N-terminus, the 593-residue chain is Metal-response element-binding transcription factor 2 (593 aa).

The interval 1-24 (MRDSTGAGNSLVHKRSPLRRNQKT) is disordered. A compositionally biased stretch (basic residues) spans 12 to 22 (VHKRSPLRRNQ). At threonine 24 the chain carries Phosphothreonine. The Tudor domain occupies 44 to 101 (CKFEEGQDVLARWSDGLFYLGTIKKINILKQSCFIIFEDSSKSWVLWKDIQTGATGSG). 2 consecutive PHD-type zinc fingers follow at residues 102 to 157 (EMVC…CVFA) and 201 to 255 (QCYC…CSSG). 2 disordered regions span residues 357-410 (VAFK…GPYT) and 444-486 (GIAH…TRTG). A Glycyl lysine isopeptide (Lys-Gly) (interchain with G-Cter in SUMO2) cross-link involves residue lysine 360. Over residues 360–374 (KAEKEPEGTSHEFKI) the composition is skewed to basic and acidic residues. The span at 447–470 (HSSNTSDVDLTGASSANETTSASI) shows a compositional bias: polar residues. Serine 452 carries the phosphoserine modification. Lysine 522 is covalently cross-linked (Glycyl lysine isopeptide (Lys-Gly) (interchain with G-Cter in SUMO2)).

This sequence belongs to the Polycomblike family. In terms of assembly, associates with the PRC2 complex, which consists of the core components EED, EZH1 or EZH2, SUZ12, and RBBP4, and various combinations of accessory subunits including AEBP2, JARID2, PHF19, MTF2 and EPOP. Forms a dimeric PRC2.1 (class 1, PRC-PCL) complex consisting of at least SUZ12, RBBP4, and PHF19 or MTF2; PHF19 and MTF2 stabilize the dimeric structure which enhances PRC2 interaction with chromatin.

It is found in the nucleus. In terms of biological role, polycomb group (PcG) protein that specifically binds histone H3 trimethylated at 'Lys-36' (H3K36me3) and recruits the PRC2 complex, thus enhancing PRC2 H3K27me3 methylation activity. Regulates the transcriptional networks during embryonic stem cell self-renewal and differentiation. Promotes recruitment of the PRC2 complex to the inactive X chromosome in differentiating XX ES cells and PRC2 recruitment to target genes in undifferentiated ES cells. Required to repress Hox genes by enhancing H3K27me3 methylation of the PRC2 complex. In some conditions may act as an inhibitor of PRC2 activity: able to activate the CDKN2A gene and promote cellular senescence by suppressing the catalytic activity of the PRC2 complex locally. Binds to the metal-regulating-element (MRE) of MT1A gene promoter. The chain is Metal-response element-binding transcription factor 2 (Mtf2) from Mus musculus (Mouse).